The sequence spans 586 residues: MASKKREVQLQSVVNSQNLWDEMLLNKGLTVIDVYQAWCGPCKAVQSLFRKLKNELNEDEILHFVVAEADNIVTLQPFRDKCEPVFLFSLNGKIIAKIQGANAPLINRKVITLIDEERKIVAGEMDRPQYVEIPLVDAIDEEYGEVQYESAAEVYNMAIIKPDAVLMRKNIEVREKIAKEGFVIEIQENLILPEEVVREFYTHIADQPDFEEFVVSMTNGLSCVLIVSQEDSEVIQEETLPQTDTEEEPGVLEEPHVRFAPVMIKKKRDSLQEYMDRQHMSDYCDVEDDAVKVSKLIDILFPDFKTMKSTNVQTTLALLHPDICEEEKDDVLNVIHNEGFTILMQRQIVLSEEEARTVCKIHENEEYFDNLIGHMTSNHSYVLALRRENGVEYWKTLIGPKTIEEAYASHPQSLCVQFASGNFPTNQFYGSSSKAAAEKEIAHFFPPQSTLALIKPHVTHKERMEILKTIKEAGFELTLMKEMHLTPEHANKIYFKITGKDFYKNVLEVLSLGMSLVMVLTKWNAVAEWRRMVGPVDPEEAKLLSPESLRAKYGLDILRNAVHGASNFSEASEIISNVFTEGNPEN.

Positions 10-116 (LQSVVNSQNL…NRKVITLIDE (107 aa)) constitute a Thioredoxin domain. The cysteines at positions 39 and 42 are disulfide-linked. NDK regions lie at residues 157–254 (MAII…VLEE), 312–452 (VQTT…STLA), and 453–586 (LIKP…NPEN).

This sequence in the C-terminal section; belongs to the NDK family. In terms of assembly, monomer. In terms of tissue distribution, testis-specific. Expressed mainly in round spermatids.

It is found in the cytoplasm. Probably required during the final stages of sperm tail maturation in the testis and/or epididymis, where extensive disulfide bonding of fibrous sheath (FS) proteins occurs. In vitro, it has neither nucleoside diphosphate kinase (NDPK) activity nor reducing activity on disulfide bonds. Exhibits a 3'-5' exonuclease activity with a preference for single-stranded DNA, suggesting roles in DNA proofreading and repair. The polypeptide is Thioredoxin domain-containing protein 3 (Nme8) (Mus musculus (Mouse)).